Consider the following 118-residue polypeptide: Small ribosomal subunit protein uS13 (118 aa).

The disordered stretch occupies residues 93-118 (RGLPVRGQRTKTNARTRKGPRKPIRK).

It belongs to the universal ribosomal protein uS13 family. In terms of assembly, part of the 30S ribosomal subunit. Forms a loose heterodimer with protein S19. Forms two bridges to the 50S subunit in the 70S ribosome.

Functionally, located at the top of the head of the 30S subunit, it contacts several helices of the 16S rRNA. In the 70S ribosome it contacts the 23S rRNA (bridge B1a) and protein L5 of the 50S subunit (bridge B1b), connecting the 2 subunits; these bridges are implicated in subunit movement. Contacts the tRNAs in the A and P-sites. This is Small ribosomal subunit protein uS13 from Pseudomonas syringae pv. tomato (strain ATCC BAA-871 / DC3000).